We begin with the raw amino-acid sequence, 1068 residues long: Protein AF-10 (1068 aa).

The PHD-type 1 zinc-finger motif lies at 22–74; sequence IGGCCVCSDERGWAENPLVYCDGHGCSVAVHQACYGIVQVPTGPWFCRKCESQ. The C2HC pre-PHD-type zinc-finger motif lies at 79–112; it reads RVRCELCPHKDGALKRTDNGGWAHVVCALYIPEV. The tract at residues 106–190 is required for interaction with histone H3; sequence ALYIPEVQFA…EGNGADNVQY (85 aa). The segment at 135 to 198 adopts a PHD-type 2 zinc-finger fold; that stretch reads KTCYICDEQG…QYCGYCKYHF (64 aa). The segment at 207-260 is disordered; sequence GSNRSYEQSLSDSSSHSQDKHHEKEKKKYKEKDKHKQKHKKQPEPSPALVPSLT. Ser217 carries the post-translational modification Phosphoserine. The segment covering 223–240 has biased composition (basic and acidic residues); sequence SQDKHHEKEKKKYKEKDK. Ser252 bears the Phosphoserine mark. Lys280 participates in a covalent cross-link: Glycyl lysine isopeptide (Lys-Gly) (interchain with G-Cter in SUMO2). Over residues 296 to 305 the composition is skewed to polar residues; that stretch reads EVSAHTSSGK. Disordered regions lie at residues 296-416 and 428-506; these read EVSA…SFSS and SQPK…SVAS. Residues 306 to 317 show a composition bias toward basic and acidic residues; sequence DVSEARGSEGKG. Positions 340 to 351 are enriched in polar residues; the sequence is TAVSASSPFPQG. Positions 352-372 are enriched in low complexity; sequence SFSGTPGSVKSSSGSSVQSPQ. Composition is skewed to polar residues over residues 387–396, 404–416, and 428–446; these read YTHTQQPSST, SGSQ…SFSS, and SQPK…SSLP. At Ser436 the chain carries Phosphoserine. Residues 465–483 are compositionally biased toward basic residues; sequence EKKRKGNKQSKHGPGRPKG. The segment covering 490 to 506 has biased composition (low complexity); it reads VSHLSVSSASPTSSVAS. Ser532 carries the post-translational modification Phosphoserine. Residues 583–594 are compositionally biased toward low complexity; the sequence is SGSGSSTPVSSS. Disordered regions lie at residues 583-613 and 660-698; these read SGSG…LSPS and SESS…NLQL. A compositionally biased stretch (polar residues) spans 595–604; the sequence is HIPQQSSGHL. Residues 681-692 show a composition bias toward low complexity; it reads SSPRGSLSPRSP. Residues Ser686, Ser688, and Ser691 each carry the phosphoserine modification. Residues 752-780 are leucine-zipper; sequence LQVENRRLEEQIKNLTAKKERLQLLNAQL. Disordered regions lie at residues 786-869 and 1040-1068; these read AITT…VSGV and PFLT…QEKS. A compositionally biased stretch (polar residues) spans 787–816; that stretch reads ITTNPSPSHQMHTYTAQTAPPPDSLNSSKS. Composition is skewed to low complexity over residues 836-850 and 857-869; these read LTSS…SALS and QSPA…VSGV. A compositionally biased stretch (polar residues) spans 1040 to 1054; sequence PFLTIHGDSTSQKVT.

Self-associates. Interacts with FSTL3; the interaction enhances MLLT10 in vitro transcriptional activity and self-association. Interacts with YEATS4. Interacts with SS18. Interacts with DOT1L. Interacts with histone H3; interaction is necessary for MLLT10 binding to nucleosomes; interaction is inhibited by histone H3 'Lys-27' methylations (H3K27me1, H3K27me2 and H3K27me3) amd acetylation; interaction stabilizes association of MLLT10 at chromatin; interaction is essential for histone H3 'Lys-79' dimethylation (H3K79me2).

Its subcellular location is the nucleus. In terms of biological role, probably involved in transcriptional regulation. Binds to cruciform DNA. In cells, binding to unmodified histone H3 regulates DOT1L functions including histone H3 'Lys-79' dimethylation (H3K79me2) and gene activation. The polypeptide is Protein AF-10 (Mus musculus (Mouse)).